Reading from the N-terminus, the 317-residue chain is Melanocyte-stimulating hormone receptor (317 aa).

The Extracellular segment spans residues 1–37; that stretch reads MPVQGSQRRLLGSLNSTPTAPPHLGLAANQTGARCLE. The N-linked (GlcNAc...) asparagine glycan is linked to asparagine 29. The chain crosses the membrane as a helical span at residues 38 to 63; the sequence is VSIPDGLFLSLGLVSLVENVLVVTAI. Over 64–72 the chain is Cytoplasmic; the sequence is AKNRNLHSP. Residues 73–93 traverse the membrane as a helical segment; the sequence is MYCFICCLALSDLLVSGSNML. Over 94 to 118 the chain is Extracellular; that stretch reads ETAVILLLEAGALAARAAVVQQLDN. The chain crosses the membrane as a helical span at residues 119 to 140; that stretch reads VIDVITCSSMLSSLCFLGAIAV. The Cytoplasmic segment spans residues 141-163; it reads DRYISIFYALRYHSIVTLPRARR. A helical transmembrane segment spans residues 164-183; it reads AVAAIWVASVLFSMLFIAYY. The Extracellular segment spans residues 184-191; the sequence is DHAAVLLC. Residues 192–211 traverse the membrane as a helical segment; the sequence is LVVFFLAMLVLMAVLYIHML. The Cytoplasmic portion of the chain corresponds to 212-240; that stretch reads VRACQHAQGIARLHKRQRPAHQGFGLKGA. Residues 241 to 266 traverse the membrane as a helical segment; the sequence is ATLTILLGIFFLCWGPFFLHLTLIVL. Topologically, residues 267–279 are extracellular; sequence CPQHPTCSCIFKN. A helical transmembrane segment spans residues 280 to 300; sequence FNLFLALIICNAIIDPLIYAF. Residues 301–317 lie on the Cytoplasmic side of the membrane; it reads RSQELRRTLKEVLLCSW. The S-palmitoyl cysteine moiety is linked to residue cysteine 315.

The protein belongs to the G-protein coupled receptor 1 family. As to quaternary structure, interacts with MGRN1, but does not undergo MGRN1-mediated ubiquitination; this interaction competes with GNAS-binding and thus inhibits agonist-induced cAMP production. Interacts with OPN3; the interaction results in a decrease in MC1R-mediated cAMP signaling and ultimately a decrease in melanin production in melanocytes.

Its subcellular location is the cell membrane. Functionally, receptor for MSH (alpha, beta and gamma) and ACTH. The activity of this receptor is mediated by G proteins which activate adenylate cyclase. Mediates melanogenesis, the production of eumelanin (black/brown) and phaeomelanin (red/yellow), via regulation of cAMP signaling in melanocytes. The protein is Melanocyte-stimulating hormone receptor (MC1R) of Cercopithecus diana (Diana monkey).